A 298-amino-acid polypeptide reads, in one-letter code: Release factor glutamine methyltransferase (298 aa).

Residues Gly-131–Gly-135, Asp-162, Trp-189, and Asn-205 contribute to the S-adenosyl-L-methionine site. Asn-205–Tyr-208 contacts substrate.

This sequence belongs to the protein N5-glutamine methyltransferase family. PrmC subfamily.

The catalysed reaction is L-glutaminyl-[peptide chain release factor] + S-adenosyl-L-methionine = N(5)-methyl-L-glutaminyl-[peptide chain release factor] + S-adenosyl-L-homocysteine + H(+). Methylates the class 1 translation termination release factors RF1/PrfA and RF2/PrfB on the glutamine residue of the universally conserved GGQ motif. The protein is Release factor glutamine methyltransferase of Pasteurella multocida (strain Pm70).